Reading from the N-terminus, the 352-residue chain is Peptide chain release factor 1 (352 aa).

The residue at position 233 (glutamine 233) is an N5-methylglutamine. The interval 288-309 (NAKDRKEQVGSGDRSERIRTYN) is disordered. Residues 289 to 306 (AKDRKEQVGSGDRSERIR) show a composition bias toward basic and acidic residues.

The protein belongs to the prokaryotic/mitochondrial release factor family. Methylated by PrmC. Methylation increases the termination efficiency of RF1.

It localises to the cytoplasm. Its function is as follows. Peptide chain release factor 1 directs the termination of translation in response to the peptide chain termination codons UAG and UAA. The chain is Peptide chain release factor 1 from Helicobacter pylori (strain HPAG1).